A 323-amino-acid chain; its full sequence is MQADWKPTASIEQLRQRAVLIANIRQFFAQRGVLEVDTPAMSHATVTDIHLHTFQTEFVGPGYAQGRHLHLMTSPEFHMKRLLAAGSGCIYQMAKAFRNEENGRHHNPEFTMLEWYRVGFDHHQLMDEMDDLLQLILKCGTAERMTYQQAFLTVLGVCPLEGSMAELKSVAARLGLSDIAEPEEDRDTLLQLLFSIGVEAKIGQQVPAFVYDFPASQAALAKINPNDPRVADRFEVYFKGIELANGFHELDNPQEQLTRFEQDNAKRIDMGLTPQPIDYHLIAALESGLPACAGVALGVDRLIMLSLGCTHIDEITAFPFPIA.

74–76 (SPE) lines the substrate pocket. Residues 98–100 (RNE) and Asn-107 each bind ATP. Tyr-116 contacts substrate. 242 to 243 (EL) contacts ATP. Residue Glu-249 coordinates substrate. An ATP-binding site is contributed by Gly-298.

The protein belongs to the class-II aminoacyl-tRNA synthetase family. EpmA subfamily. As to quaternary structure, homodimer.

The catalysed reaction is D-beta-lysine + L-lysyl-[protein] + ATP = N(6)-((3R)-3,6-diaminohexanoyl)-L-lysyl-[protein] + AMP + diphosphate + H(+). With EpmB is involved in the beta-lysylation step of the post-translational modification of translation elongation factor P (EF-P). Catalyzes the ATP-dependent activation of (R)-beta-lysine produced by EpmB, forming a lysyl-adenylate, from which the beta-lysyl moiety is then transferred to the epsilon-amino group of a conserved specific lysine residue in EF-P. In Vibrio vulnificus (strain YJ016), this protein is Elongation factor P--(R)-beta-lysine ligase.